We begin with the raw amino-acid sequence, 99 residues long: N(2)-fixation sustaining protein CowN (99 aa).

This sequence belongs to the CowN family.

Functionally, is required to sustain N(2)-dependent growth in the presence of low levels of carbon monoxide (CO). Probably acts by protecting the N(2) fixation ability of the nitrogenase complex, which is inactivated in the presence of CO. The sequence is that of N(2)-fixation sustaining protein CowN from Magnetococcus marinus (strain ATCC BAA-1437 / JCM 17883 / MC-1).